Consider the following 584-residue polypeptide: uncharacterized protein (584 aa).

PbH1 repeat units lie at residues 100–128 (QENI…RSTH), 139–161 (CSNV…IVSP), 173–195 (SEQI…SITG), 196–225 (CDMV…DIEG), 236–266 (PINV…LIEG), 313–333 (TSDA…IDVR), 334–356 (GKSV…LVYQ), 357–382 (SSDV…GLRA), 406–427 (GGNM…WIAQ), 456–478 (NAGA…YCST), and 529–554 (SAGS…QTNT).

This is an uncharacterized protein from Bacillus subtilis (strain 168).